We begin with the raw amino-acid sequence, 136 residues long: Large ribosomal subunit protein uL16 (136 aa).

It belongs to the universal ribosomal protein uL16 family. In terms of assembly, part of the 50S ribosomal subunit.

Functionally, binds 23S rRNA and is also seen to make contacts with the A and possibly P site tRNAs. This Rickettsia typhi (strain ATCC VR-144 / Wilmington) protein is Large ribosomal subunit protein uL16.